The primary structure comprises 316 residues: 4-hydroxy-3-methylbut-2-enyl diphosphate reductase (316 aa).

Residue Cys17 participates in [4Fe-4S] cluster binding. Residues His46 and His79 each contribute to the (2E)-4-hydroxy-3-methylbut-2-enyl diphosphate site. The dimethylallyl diphosphate site is built by His46 and His79. Residues His46 and His79 each contribute to the isopentenyl diphosphate site. Cys101 serves as a coordination point for [4Fe-4S] cluster. His129 is a (2E)-4-hydroxy-3-methylbut-2-enyl diphosphate binding site. His129 lines the dimethylallyl diphosphate pocket. Position 129 (His129) interacts with isopentenyl diphosphate. Catalysis depends on Glu131, which acts as the Proton donor. Thr170 is a (2E)-4-hydroxy-3-methylbut-2-enyl diphosphate binding site. Residue Cys200 participates in [4Fe-4S] cluster binding. (2E)-4-hydroxy-3-methylbut-2-enyl diphosphate is bound by residues Ser228, Ser229, Asn230, and Ser273. Dimethylallyl diphosphate contacts are provided by Ser228, Ser229, Asn230, and Ser273. Residues Ser228, Ser229, Asn230, and Ser273 each coordinate isopentenyl diphosphate.

It belongs to the IspH family. The cofactor is [4Fe-4S] cluster.

The catalysed reaction is isopentenyl diphosphate + 2 oxidized [2Fe-2S]-[ferredoxin] + H2O = (2E)-4-hydroxy-3-methylbut-2-enyl diphosphate + 2 reduced [2Fe-2S]-[ferredoxin] + 2 H(+). It carries out the reaction dimethylallyl diphosphate + 2 oxidized [2Fe-2S]-[ferredoxin] + H2O = (2E)-4-hydroxy-3-methylbut-2-enyl diphosphate + 2 reduced [2Fe-2S]-[ferredoxin] + 2 H(+). It participates in isoprenoid biosynthesis; dimethylallyl diphosphate biosynthesis; dimethylallyl diphosphate from (2E)-4-hydroxy-3-methylbutenyl diphosphate: step 1/1. Its pathway is isoprenoid biosynthesis; isopentenyl diphosphate biosynthesis via DXP pathway; isopentenyl diphosphate from 1-deoxy-D-xylulose 5-phosphate: step 6/6. Catalyzes the conversion of 1-hydroxy-2-methyl-2-(E)-butenyl 4-diphosphate (HMBPP) into a mixture of isopentenyl diphosphate (IPP) and dimethylallyl diphosphate (DMAPP). Acts in the terminal step of the DOXP/MEP pathway for isoprenoid precursor biosynthesis. The polypeptide is 4-hydroxy-3-methylbut-2-enyl diphosphate reductase (Ruegeria pomeroyi (strain ATCC 700808 / DSM 15171 / DSS-3) (Silicibacter pomeroyi)).